A 232-amino-acid chain; its full sequence is Small ribosomal subunit protein uS3 (232 aa).

In terms of domain architecture, KH type-2 spans 39 to 107 (VRRFLEQRLK…PVHVNIEEVR (69 aa)).

The protein belongs to the universal ribosomal protein uS3 family. As to quaternary structure, part of the 30S ribosomal subunit. Forms a tight complex with proteins S10 and S14.

In terms of biological role, binds the lower part of the 30S subunit head. Binds mRNA in the 70S ribosome, positioning it for translation. In Chromohalobacter salexigens (strain ATCC BAA-138 / DSM 3043 / CIP 106854 / NCIMB 13768 / 1H11), this protein is Small ribosomal subunit protein uS3.